Reading from the N-terminus, the 172-residue chain is Large ribosomal subunit protein uL10 (172 aa).

It belongs to the universal ribosomal protein uL10 family. In terms of assembly, part of the ribosomal stalk of the 50S ribosomal subunit. The N-terminus interacts with L11 and the large rRNA to form the base of the stalk. The C-terminus forms an elongated spine to which L12 dimers bind in a sequential fashion forming a multimeric L10(L12)X complex.

Its function is as follows. Forms part of the ribosomal stalk, playing a central role in the interaction of the ribosome with GTP-bound translation factors. This is Large ribosomal subunit protein uL10 from Caulobacter sp. (strain K31).